Reading from the N-terminus, the 468-residue chain is MENTRRNFLKKVTAAGIGAAGLAVTDQAMAAVNQPGEAAQQKKKPAGKSDGMLRFGFIGTGSRCQEHINNVLGIQGNKIVAICDIQKGPLEKTLKHIAKFNVPEPKVYTGGEREFEKMLNNEEFDCVIIASPWEWHVPMAVAAMKAGVPYVGVEVSAANTVEECWDLVNVSEATGSHLNILENVCYRRDVMAALRMVREGLFGEMIHGTCGYQHDLRDVKFNDGIHYTYQEGGELRMGPTAYAEAQWRTQHSVTRNGDIYPTHGIGPVANCLNINRGNRFLSLTSMATQSRGLHNFVVDKGGANHPYAKIHFNLGDIVTSMIKCANGQTVIVTHDTNLPRPYSLGFRIQGTRGLWMNDGNHVYVEGQSKPHRWDASDDWFKKYDHKLWSTLELKAKEAGHGGMDYIMMYDFIDAIRNKKPTPMDCYDAAAWSAISGLSEMSIARGGAVVDFPDFTRGQWIHRQPAFAL.

Residues 1 to 30 (MENTRRNFLKKVTAAGIGAAGLAVTDQAMA) constitute a signal peptide (tat-type signal). Residues 62 to 63 (SR), D84, 133 to 136 (WEWH), 154 to 155 (EV), and N183 each bind NAD(+). Y212 contacts substrate. Position 243 to 247 (243 to 247 (AEAQW)) interacts with NAD(+). Residues R248, 260–263 (YPTH), and Y342 contribute to the substrate site. Y260 contacts NAD(+).

The protein belongs to the Gfo/Idh/MocA family. Glycosyl hydrolase 109 subfamily. It depends on NAD(+) as a cofactor. Predicted to be exported by the Tat system. The position of the signal peptide cleavage has not been experimentally proven.

The catalysed reaction is Cleavage of non-reducing alpha-(1-&gt;3)-N-acetylgalactosamine residues from human blood group A and AB mucin glycoproteins, Forssman hapten and blood group A lacto series glycolipids.. Functionally, glycosidase that has specific alpha-N-acetylgalactosaminidase activity. The sequence is that of Alpha-N-acetylgalactosaminidase (nagA) from Tannerella forsythia (Bacteroides forsythus).